The chain runs to 222 residues: 7-cyano-7-deazaguanine synthase (222 aa).

L8–L18 contacts ATP. C186, C194, C197, and C200 together coordinate Zn(2+).

The protein belongs to the QueC family. As to quaternary structure, homodimer. The cofactor is Zn(2+).

The enzyme catalyses 7-carboxy-7-deazaguanine + NH4(+) + ATP = 7-cyano-7-deazaguanine + ADP + phosphate + H2O + H(+). The protein operates within purine metabolism; 7-cyano-7-deazaguanine biosynthesis. Functionally, catalyzes the ATP-dependent conversion of 7-carboxy-7-deazaguanine (CDG) to 7-cyano-7-deazaguanine (preQ(0)). This Acetivibrio thermocellus (strain ATCC 27405 / DSM 1237 / JCM 9322 / NBRC 103400 / NCIMB 10682 / NRRL B-4536 / VPI 7372) (Clostridium thermocellum) protein is 7-cyano-7-deazaguanine synthase.